Consider the following 376-residue polypeptide: Alpha-centractin (376 aa).

Met-1 is modified (N-acetylmethionine).

It belongs to the actin family. ARP1 subfamily. As to quaternary structure, part of the ACTR1A/ACTB filament around which the dynactin complex is built. The filament contains 8 copies of ACTR1A and 1 ACTB. Interacts with dynein and adapters such as BICD2. Interacts with BCCIP (isoform 2/alpha).

Its subcellular location is the cytoplasm. The protein localises to the cytoskeleton. It localises to the microtubule organizing center. It is found in the centrosome. The protein resides in the cell cortex. Its function is as follows. Part of the ACTR1A/ACTB filament around which the dynactin complex is built. The dynactin multiprotein complex activates the molecular motor dynein for ultra-processive transport along microtubules. This chain is Alpha-centractin (ACTR1A), found in Canis lupus familiaris (Dog).